The chain runs to 158 residues: 6,7-dimethyl-8-ribityllumazine synthase (158 aa).

5-amino-6-(D-ribitylamino)uracil-binding positions include Phe-24, 58-60 (AFE), and 82-84 (AVI). 87-88 (GT) is a (2S)-2-hydroxy-3-oxobutyl phosphate binding site. Residue His-90 is the Proton donor of the active site. Phe-115 provides a ligand contact to 5-amino-6-(D-ribitylamino)uracil. Arg-129 is a binding site for (2S)-2-hydroxy-3-oxobutyl phosphate.

It belongs to the DMRL synthase family. As to quaternary structure, forms an icosahedral capsid composed of 60 subunits, arranged as a dodecamer of pentamers.

The enzyme catalyses (2S)-2-hydroxy-3-oxobutyl phosphate + 5-amino-6-(D-ribitylamino)uracil = 6,7-dimethyl-8-(1-D-ribityl)lumazine + phosphate + 2 H2O + H(+). It functions in the pathway cofactor biosynthesis; riboflavin biosynthesis; riboflavin from 2-hydroxy-3-oxobutyl phosphate and 5-amino-6-(D-ribitylamino)uracil: step 1/2. In terms of biological role, catalyzes the formation of 6,7-dimethyl-8-ribityllumazine by condensation of 5-amino-6-(D-ribitylamino)uracil with 3,4-dihydroxy-2-butanone 4-phosphate. This is the penultimate step in the biosynthesis of riboflavin. The protein is 6,7-dimethyl-8-ribityllumazine synthase of Pseudomonas putida (strain GB-1).